The chain runs to 318 residues: MDKKIKRVAMVGAGLVGVSVLYSCMNRGLAEQYGIIDINDKLSVGHSLDFEDASAANNHNFSVGKIEYSDLKDYDVVVITAGRPQKPGETRLEMVADNAKIMSNIAKNIKKSGFKGVSIVVANPVDVMTFIYQHETGFDKNRVISSGTSLDSARLRFEISKKLKVHPKSVQAFVLGEHGDSSVSVYSAATVSGKSFNEIVKERGISKKELEDMHTTVYKKAYEIINRKGSTYFGIGSTVAELVEAILTDSHAIFGVGVYLTGQYGVKDLYIGVPTVLGSKGVVEVINFNLTKEEQEKFVSSATILKGNIQKALEAIKG.

Residues Val-16, Asp-37, and Tyr-68 each coordinate NAD(+). Residues Gln-85, Arg-91, and 123–126 (NPVD) contribute to the substrate site. Residues 121–123 (VAN) and Ser-146 contribute to the NAD(+) site. 151–154 (DSAR) serves as a coordination point for substrate. His-178 functions as the Proton acceptor in the catalytic mechanism. Tyr-222 is modified (phosphotyrosine). Thr-231 is a substrate binding site.

The protein belongs to the LDH/MDH superfamily. LDH family. As to quaternary structure, homotetramer.

It localises to the cytoplasm. The enzyme catalyses (S)-lactate + NAD(+) = pyruvate + NADH + H(+). It participates in fermentation; pyruvate fermentation to lactate; (S)-lactate from pyruvate: step 1/1. Its function is as follows. Catalyzes the conversion of lactate to pyruvate. The sequence is that of L-lactate dehydrogenase from Mycoplasma mobile (strain ATCC 43663 / 163K / NCTC 11711) (Mesomycoplasma mobile).